We begin with the raw amino-acid sequence, 273 residues long: Putative phosphoenolpyruvate synthase regulatory protein (273 aa).

Position 153-160 (153-160 (GVSRCGKT)) interacts with ADP.

It belongs to the pyruvate, phosphate/water dikinase regulatory protein family. PSRP subfamily.

The catalysed reaction is [pyruvate, water dikinase] + ADP = [pyruvate, water dikinase]-phosphate + AMP + H(+). It catalyses the reaction [pyruvate, water dikinase]-phosphate + phosphate + H(+) = [pyruvate, water dikinase] + diphosphate. In terms of biological role, bifunctional serine/threonine kinase and phosphorylase involved in the regulation of the phosphoenolpyruvate synthase (PEPS) by catalyzing its phosphorylation/dephosphorylation. This is Putative phosphoenolpyruvate synthase regulatory protein from Yersinia enterocolitica serotype O:8 / biotype 1B (strain NCTC 13174 / 8081).